The chain runs to 80 residues: Small ribosomal subunit protein bS18c (80 aa).

Residues 1–19 are compositionally biased toward basic residues; that stretch reads MKKFISRPKRSSRRRKKTP. The segment at 1-24 is disordered; sequence MKKFISRPKRSSRRRKKTPIKPGE.

Belongs to the bacterial ribosomal protein bS18 family. Part of the 30S ribosomal subunit.

The protein resides in the plastid. Its subcellular location is the chloroplast. This is Small ribosomal subunit protein bS18c from Staurastrum punctulatum (Green alga).